The chain runs to 785 residues: Endonuclease MutS2 (785 aa).

Position 335-342 (Gly-335–Thr-342) interacts with ATP. In terms of domain architecture, Smr spans Leu-710–Lys-785.

Belongs to the DNA mismatch repair MutS family. MutS2 subfamily. As to quaternary structure, homodimer. Binds to stalled ribosomes, contacting rRNA.

Functionally, endonuclease that is involved in the suppression of homologous recombination and thus may have a key role in the control of bacterial genetic diversity. Acts as a ribosome collision sensor, splitting the ribosome into its 2 subunits. Detects stalled/collided 70S ribosomes which it binds and splits by an ATP-hydrolysis driven conformational change. Acts upstream of the ribosome quality control system (RQC), a ribosome-associated complex that mediates the extraction of incompletely synthesized nascent chains from stalled ribosomes and their subsequent degradation. Probably generates substrates for RQC. This chain is Endonuclease MutS2, found in Listeria welshimeri serovar 6b (strain ATCC 35897 / DSM 20650 / CCUG 15529 / CIP 8149 / NCTC 11857 / SLCC 5334 / V8).